A 634-amino-acid polypeptide reads, in one-letter code: Protein IcfG (634 aa).

The HAMP domain occupies 306 to 361 (HHSTVPILDLTKASQAIAAGDLDYEININQGNRQDEIGILGNSFIYMKNQIKTLIA). One can recognise a PPM-type phosphatase domain in the interval 385–633 (PISLPDLQQW…DDITMIAVYR (249 aa)).

In terms of biological role, involved in cross-regulation of inorganic carbon and glucose metabolisms. The polypeptide is Protein IcfG (icfG) (Synechocystis sp. (strain ATCC 27184 / PCC 6803 / Kazusa)).